The chain runs to 330 residues: GMP reductase (330 aa).

Cysteine 180 serves as the catalytic Thioimidate intermediate. 209-232 (LIADGGIRHNGDIAKSVRFGASMV) is an NADP(+) binding site.

Belongs to the IMPDH/GMPR family. GuaC type 2 subfamily.

The enzyme catalyses IMP + NH4(+) + NADP(+) = GMP + NADPH + 2 H(+). Its function is as follows. Catalyzes the irreversible NADPH-dependent deamination of GMP to IMP. It functions in the conversion of nucleobase, nucleoside and nucleotide derivatives of G to A nucleotides, and in maintaining the intracellular balance of A and G nucleotides. The polypeptide is GMP reductase (Lactobacillus gasseri (strain ATCC 33323 / DSM 20243 / BCRC 14619 / CIP 102991 / JCM 1131 / KCTC 3163 / NCIMB 11718 / NCTC 13722 / AM63)).